The chain runs to 313 residues: Ribosomal RNA small subunit methyltransferase H (313 aa).

S-adenosyl-L-methionine-binding positions include 33 to 35 (AGH), Asp53, Phe82, Asp103, and Gln110.

The protein belongs to the methyltransferase superfamily. RsmH family.

It localises to the cytoplasm. The catalysed reaction is cytidine(1402) in 16S rRNA + S-adenosyl-L-methionine = N(4)-methylcytidine(1402) in 16S rRNA + S-adenosyl-L-homocysteine + H(+). Its function is as follows. Specifically methylates the N4 position of cytidine in position 1402 (C1402) of 16S rRNA. In Ruminiclostridium cellulolyticum (strain ATCC 35319 / DSM 5812 / JCM 6584 / H10) (Clostridium cellulolyticum), this protein is Ribosomal RNA small subunit methyltransferase H.